Here is a 1398-residue protein sequence, read N- to C-terminus: DNA-directed RNA polymerase subunit beta' (1398 aa).

Zn(2+) is bound by residues C71, C73, C86, and C89. Mg(2+) is bound by residues D462, D464, and D466. Residues C810, C883, C890, and C893 each contribute to the Zn(2+) site. Positions 1377-1398 (EKQAAVVSPAPEAELPALPPAE) are disordered. Residues 1380–1392 (AAVVSPAPEAELP) show a composition bias toward low complexity.

The protein belongs to the RNA polymerase beta' chain family. As to quaternary structure, the RNAP catalytic core consists of 2 alpha, 1 beta, 1 beta' and 1 omega subunit. When a sigma factor is associated with the core the holoenzyme is formed, which can initiate transcription. Requires Mg(2+) as cofactor. Zn(2+) is required as a cofactor.

It carries out the reaction RNA(n) + a ribonucleoside 5'-triphosphate = RNA(n+1) + diphosphate. DNA-dependent RNA polymerase catalyzes the transcription of DNA into RNA using the four ribonucleoside triphosphates as substrates. This chain is DNA-directed RNA polymerase subunit beta', found in Bradyrhizobium diazoefficiens (strain JCM 10833 / BCRC 13528 / IAM 13628 / NBRC 14792 / USDA 110).